A 79-amino-acid polypeptide reads, in one-letter code: Ferredoxin (79 aa).

4Fe-4S ferredoxin-type domains follow at residues 2–30 and 31–60; these read PHVI…YDGG and DQFY…PEED. Residues C9 and C17 each contribute to the [3Fe-4S] cluster site. Residues C21, C40, C43, and C46 each contribute to the [4Fe-4S] cluster site. C50 provides a ligand contact to [3Fe-4S] cluster.

Requires [4Fe-4S] cluster as cofactor. [3Fe-4S] cluster is required as a cofactor.

Functionally, ferredoxins are iron-sulfur proteins that transfer electrons in a wide variety of metabolic reactions. In Thermus thermophilus (strain ATCC 27634 / DSM 579 / HB8), this protein is Ferredoxin.